The chain runs to 437 residues: Flagellar biosynthesis protein FlhF (437 aa).

Residues 225–232, 303–307, and 361–364 each bind GTP; these read GPAGMGKT, DTAGL, and TKLD.

It belongs to the GTP-binding SRP family.

It is found in the cell membrane. Its function is as follows. Necessary for flagellar biosynthesis. May be involved in translocation of the flagellum. This chain is Flagellar biosynthesis protein FlhF (flhF), found in Pseudomonas putida (Arthrobacter siderocapsulatus).